The following is a 444-amino-acid chain: Acyl-CoA (8-3)-desaturase (444 aa).

At Met-1 the chain carries N-acetylmethionine. The Cytoplasmic segment spans residues 1–121; that stretch reads MAPDPVAAKT…FRELRATVEQ (121 aa). One can recognise a Cytochrome b5 heme-binding domain in the interval 17 to 94; the sequence is PRYFTWDEVA…MNSLLIGELS (78 aa). The chain crosses the membrane as a helical span at residues 122–142; that stretch reads MGLMKANHVFFLLYLLHILLL. Over 143–146 the chain is Lumenal; sequence DGAA. A helical transmembrane segment spans residues 147-167; it reads WLTLWIFGTSFLPFLLCAVLL. At 168–267 the chain is on the cytoplasmic side; the sequence is TAAQIQAGWL…PYNHQHKYFF (100 aa). The Histidine box-1 signature appears at 179-183; that stretch reads HDLGH. The short motif at 216–220 is the Histidine box-2 element; sequence HFQHH. The helical transmembrane segment at 268–288 threads the bilayer; the sequence is LIGPPALVPFFFQWYVFYFVI. The Lumenal portion of the chain corresponds to 289–305; the sequence is QRKKWVDLAWMITFYIR. Residues 306 to 326 traverse the membrane as a helical segment; the sequence is LLLTYVPLLGLKAFLGLYFIV. The Cytoplasmic portion of the chain corresponds to 327-444; it reads RFLESNWFVW…QLWLDAYLHQ (118 aa). The Histidine box-3 motif lies at 382–386; the sequence is QIEHH.

The protein belongs to the fatty acid desaturase type 1 family. As to expression, widely expressed. Expressed in brain, liver and thymus (at protein level). Isoform 1 seems to be more abundant than isoform 2. Expression of isoform 2 is very low in spleen and not detectable in skeletal muscle.

The protein resides in the endoplasmic reticulum membrane. It localises to the mitochondrion. It carries out the reaction (8Z,11Z,14Z)-eicosatrienoyl-CoA + 2 Fe(II)-[cytochrome b5] + O2 + 2 H(+) = (5Z,8Z,11Z,14Z)-eicosatetraenoyl-CoA + 2 Fe(III)-[cytochrome b5] + 2 H2O. The catalysed reaction is (8Z,11Z,14Z,17Z)-eicosatetraenoyl-CoA + 2 Fe(II)-[cytochrome b5] + O2 + 2 H(+) = (5Z,8Z,11Z,14Z,17Z)-eicosapentaenoyl-CoA + 2 Fe(III)-[cytochrome b5] + 2 H2O. It catalyses the reaction (11E)-octadecenoyl-CoA + 2 Fe(II)-[cytochrome b5] + O2 + 2 H(+) = (5Z,11E)-octadecadienoyl-CoA + 2 Fe(III)-[cytochrome b5] + 2 H2O. The protein operates within lipid metabolism; polyunsaturated fatty acid biosynthesis. Its function is as follows. Acts as a front-end fatty acyl-coenzyme A (CoA) desaturase that introduces a cis double bond at carbon 5 located between a preexisting double bond and the carboxyl end of the fatty acyl chain. Involved in biosynthesis of highly unsaturated fatty acids (HUFA) from the essential polyunsaturated fatty acids (PUFA) linoleic acid (LA) (18:2n-6) and alpha-linolenic acid (ALA) (18:3n-3) precursors. Specifically, desaturates dihomo-gamma-linoleoate (DGLA) (20:3n-6) and eicosatetraenoate (ETA) (20:4n-3) to generate arachidonate (AA) (20:4n-6) and eicosapentaenoate (EPA) (20:5n-3), respectively. As a rate limiting enzyme for DGLA (20:3n-6) and AA (20:4n-6)-derived eicosanoid biosynthesis, controls the metabolism of inflammatory lipids like prostaglandin E2, critical for efficient acute inflammatory response and maintenance of epithelium homeostasis. Contributes to membrane phospholipid biosynthesis by providing AA (20:4n-6) as a major acyl chain esterified into phospholipids. In particular, regulates phosphatidylinositol-4,5-bisphosphate levels, modulating inflammatory cytokine production in T-cells. Also desaturates (11E)-octadecenoate (trans-vaccenoate)(18:1n-9), a metabolite in the biohydrogenation pathway of LA (18:2n-6). In terms of biological role, does not exhibit any catalytic activity toward 20:3n-6, but it may enhance FADS2 activity. This Papio anubis (Olive baboon) protein is Acyl-CoA (8-3)-desaturase.